Reading from the N-terminus, the 174-residue chain is UPF0340 protein SAHV_2098 (174 aa).

This sequence belongs to the UPF0340 family.

This is UPF0340 protein SAHV_2098 from Staphylococcus aureus (strain Mu3 / ATCC 700698).